Reading from the N-terminus, the 345-residue chain is cAMP-responsive element modulator (345 aa).

Positions 88–147 (VQVAAIAETDESAESEGVIDSHKRREILSRRPSYRKILNELSSDVPGVPKIEEERSEEEG) constitute a KID domain. Phosphoserine is present on residues Ser-102, Ser-129, Ser-271, Ser-274, and Ser-277. A bZIP domain is found at 286–345 (TRKRELRLMKNREAAKECRRRKKEYVKCLESRVAVLEVQNKKLIEELETLKDICSPKTDY). Residues 287 to 312 (RKRELRLMKNREAAKECRRRKKEYVK) are basic motif. Residues 314 to 335 (LESRVAVLEVQNKKLIEELETL) are leucine-zipper.

It belongs to the bZIP family. In terms of assembly, binds DNA as a dimer. Interacts with FHL5. Interacts with CDC34. May interact with TSSK4. In terms of processing, isoform 9 is ubiquitinated by CDC34 and RAD6B in order to be degraded by the proteasome. Stimulated by phosphorylation. Phosphorylated on Ser-116 by TSSK4 in vitro. As to expression, expressed in testes (round spermatids) (at protein level). Isoform 14 is the major activator form in testes.

The protein localises to the nucleus. It localises to the cytoplasm. Transcriptional regulator that binds the cAMP response element (CRE), a sequence present in many viral and cellular promoters. Isoforms are either transcriptional activators or repressors. Plays a role in spermatogenesis and is involved in spermatid maturation. Its function is as follows. May play a role in the regulation of the circadian clock: acts as a transcriptional repressor of the core circadian component PER1 by directly binding to cAMP response elements in its promoter. The sequence is that of cAMP-responsive element modulator from Homo sapiens (Human).